The chain runs to 140 residues: Ribosome-binding factor A (140 aa).

Over residues 118–133 (DEAKQQKHNGKDKTDT) the composition is skewed to basic and acidic residues. A disordered region spans residues 118-140 (DEAKQQKHNGKDKTDTADSEGEE).

Belongs to the RbfA family. In terms of assembly, monomer. Binds 30S ribosomal subunits, but not 50S ribosomal subunits or 70S ribosomes.

The protein resides in the cytoplasm. Its function is as follows. One of several proteins that assist in the late maturation steps of the functional core of the 30S ribosomal subunit. Associates with free 30S ribosomal subunits (but not with 30S subunits that are part of 70S ribosomes or polysomes). Required for efficient processing of 16S rRNA. May interact with the 5'-terminal helix region of 16S rRNA. In Shewanella woodyi (strain ATCC 51908 / MS32), this protein is Ribosome-binding factor A.